Reading from the N-terminus, the 72-residue chain is DNA-directed RNA polymerase subunit epsilon (72 aa).

Belongs to the RNA polymerase subunit epsilon family. In terms of assembly, RNAP is composed of a core of 2 alpha, a beta and a beta' subunit. The core is associated with a delta subunit, and at least one of epsilon or omega. When a sigma factor is associated with the core the holoenzyme is formed, which can initiate transcription.

It carries out the reaction RNA(n) + a ribonucleoside 5'-triphosphate = RNA(n+1) + diphosphate. Functionally, a non-essential component of RNA polymerase (RNAP). This is DNA-directed RNA polymerase subunit epsilon from Staphylococcus haemolyticus (strain JCSC1435).